The sequence spans 755 residues: Beta-galactosidase (755 aa).

Residue Glu382 is the Proton donor of the active site. Catalysis depends on Glu463, which acts as the Nucleophile.

This sequence belongs to the glycosyl hydrolase 2 family.

The enzyme catalyses Hydrolysis of terminal non-reducing beta-D-galactose residues in beta-D-galactosides.. The sequence is that of Beta-galactosidase (lacZ) from Rhizobium meliloti (Ensifer meliloti).